The chain runs to 793 residues: Ankyrin repeat domain-containing protein SOWAHB (793 aa).

4 disordered regions span residues 83 to 185 (EEGL…QARA), 219 to 290 (ATAE…ELLT), 337 to 360 (QLPLEPGSTEPNSEPPDPCLSSHS), and 396 to 543 (DFVD…SPRV). 3 stretches are compositionally biased toward low complexity: residues 96–108 (APSAGGAAPCSPR), 134–144 (AGAAARAADAA), and 175–185 (AAAAAGAQARA). Ser-106 is subject to Phosphoserine. Positions 220 to 244 (TAEEKPARALPAQDDRGASREREEG) are enriched in basic and acidic residues. Low complexity predominate over residues 246-273 (LAEPAPVPAVAHSPPATVEAATSRASPP). Ser-271 carries the post-translational modification Phosphoserine. The segment covering 396–406 (DFVDQESDGSE) has biased composition (acidic residues). 2 stretches are compositionally biased toward low complexity: residues 407–417 (ESSSGPKDSPG) and 498–508 (RSSLAGRAKLS). A compositionally biased stretch (basic residues) spans 521–533 (KRSRRPPRSRKPS). 2 ANK repeats span residues 630–659 (TGYTALHWIAKHGDLRALQDLVSGAKKAGI) and 669–699 (CGYTPLHLAAIHGHQGVIKLLVQRLASRVNV). Ser-761 bears the Phosphoserine mark.

It belongs to the SOWAH family.

This chain is Ankyrin repeat domain-containing protein SOWAHB (SOWAHB), found in Homo sapiens (Human).